Here is a 137-residue protein sequence, read N- to C-terminus: Large ribosomal subunit protein uL16 (137 aa).

This sequence belongs to the universal ribosomal protein uL16 family. In terms of assembly, part of the 50S ribosomal subunit.

In terms of biological role, binds 23S rRNA and is also seen to make contacts with the A and possibly P site tRNAs. The chain is Large ribosomal subunit protein uL16 from Pseudomonas paraeruginosa (strain DSM 24068 / PA7) (Pseudomonas aeruginosa (strain PA7)).